Here is a 315-residue protein sequence, read N- to C-terminus: Glutamyl-Q tRNA(Asp) synthetase (315 aa).

Residues 23-27 and glutamate 59 each bind L-glutamate; that span reads RFAPS. A 'HIGH' region motif is present at residues 26–36; that stretch reads PSPTGPLHIGS. Residues cysteine 115, cysteine 117, tyrosine 142, and cysteine 146 each coordinate Zn(2+). L-glutamate-binding residues include tyrosine 202 and arginine 220. A 'KMSKS' region motif is present at residues 258-262; that stretch reads KLSKQ. Residue lysine 261 coordinates ATP.

It belongs to the class-I aminoacyl-tRNA synthetase family. GluQ subfamily. The cofactor is Zn(2+).

Catalyzes the tRNA-independent activation of glutamate in presence of ATP and the subsequent transfer of glutamate onto a tRNA(Asp). Glutamate is transferred on the 2-amino-5-(4,5-dihydroxy-2-cyclopenten-1-yl) moiety of the queuosine in the wobble position of the QUC anticodon. In Ralstonia nicotianae (strain ATCC BAA-1114 / GMI1000) (Ralstonia solanacearum), this protein is Glutamyl-Q tRNA(Asp) synthetase.